We begin with the raw amino-acid sequence, 366 residues long: 2-aminoethylphosphonate--pyruvate transaminase (366 aa).

The residue at position 194 (K194) is an N6-(pyridoxal phosphate)lysine.

Belongs to the class-V pyridoxal-phosphate-dependent aminotransferase family. PhnW subfamily. In terms of assembly, homodimer. Requires pyridoxal 5'-phosphate as cofactor.

The catalysed reaction is (2-aminoethyl)phosphonate + pyruvate = phosphonoacetaldehyde + L-alanine. Its function is as follows. Involved in phosphonate degradation. This chain is 2-aminoethylphosphonate--pyruvate transaminase, found in Lactiplantibacillus plantarum (strain ATCC BAA-793 / NCIMB 8826 / WCFS1) (Lactobacillus plantarum).